A 1133-amino-acid chain; its full sequence is Lon protease homolog, mitochondrial (1133 aa).

The N-terminal 37 residues, Met-1–Phe-37, are a transit peptide targeting the mitochondrion. A propeptide spans Ala-38–Ala-98 (removed in mature form; by autocatalysis). 2 stretches are compositionally biased toward basic and acidic residues: residues Ala-98 to Glu-117 and Glu-125 to Lys-143. Disordered regions lie at residues Ala-98 to Pro-176 and Glu-282 to Ile-358. Over residues Ser-145–Ser-166 the composition is skewed to low complexity. Residues Met-182–Leu-480 enclose the Lon N-terminal domain. 2 stretches are compositionally biased toward basic and acidic residues: residues Glu-282–Asp-301 and Lys-325–Gln-340. The span at Thr-348–Ile-358 shows a compositional bias: acidic residues. Gly-632 to Thr-639 provides a ligand contact to ATP. The interval Lys-839–Lys-892 is dispensable for catalytic activity. Residues Glu-844–Glu-889 form a disordered region. Residues Ser-853 to Glu-889 show a composition bias toward basic and acidic residues. Residues Thr-923–Asp-1109 enclose the Lon proteolytic domain. Residues Ser-1015 and Lys-1058 contribute to the active site.

It belongs to the peptidase S16 family. Homohexamer. Organized in a ring with a central cavity. The ATP-binding and proteolytic domains (AP-domain) form a hexameric chamber. Oligomerization is independent of its proteolytic activity and the autocatalytic maturation of its subunits.

The protein resides in the mitochondrion matrix. The enzyme catalyses Hydrolysis of proteins in presence of ATP.. Functionally, ATP-dependent serine protease that mediates the selective degradation of misfolded, unassembled or oxidatively damaged polypeptides as well as certain short-lived regulatory proteins in the mitochondrial matrix. May also have a chaperone function in the assembly of inner membrane protein complexes. Participates in the regulation of mitochondrial gene expression and in the maintenance of the integrity of the mitochondrial genome. Binds to mitochondrial DNA in a site-specific manner. Endogenous substrates include ABF2, ACO2, ILV1, ILV2, LSC1, LYS4, MGM101 and several oxidized proteins. The 2 nucleic acid-binding proteins ABF2 and MGM101 are protected from degradation by PIM1 when they are bound to DNA. This Saccharomyces cerevisiae (strain ATCC 204508 / S288c) (Baker's yeast) protein is Lon protease homolog, mitochondrial.